The following is a 285-amino-acid chain: Single myb histone 3 (285 aa).

The segment at 1 to 35 is disordered; sequence MGAPKQKWTSEEEDALRRGVRKHGAGKWRTIQKDP. Residues 1-60 form the HTH myb-type domain; sequence MGAPKQKWTSEEEDALRRGVRKHGAGKWRTIQKDPQFSPILSSRSNIDLKDKWRNLSFSA. The H-T-H motif DNA-binding region spans 28-56; the sequence is WRTIQKDPQFSPILSSRSNIDLKDKWRNL. The H15 domain occupies 113–181; sequence TPPKYGAMIM…KVDNFYRLPD (69 aa). A coiled-coil region spans residues 226-255; it reads VKVTDAEAKAHDAHDQMMEAERMLKMAEDT.

The protein belongs to the histone H1/H5 family. SMH subfamily. As to quaternary structure, forms a homodimer and heterodimers.

Its subcellular location is the nucleus. It localises to the chromosome. The protein localises to the nucleolus. The protein resides in the telomere. Binds preferentially double-stranded telomeric repeats, but may also bind to the single telomeric strand. This Zea mays (Maize) protein is Single myb histone 3 (SMH3).